Reading from the N-terminus, the 263-residue chain is Esterase mokD (263 aa).

Catalysis depends on charge relay system residues Ser-134, Asp-208, and His-236.

It belongs to the LovG family.

It carries out the reaction dihydromonacolin L-[lovastatin nonaketide synthase] + H2O = holo-[lovastatin nonaketide synthase] + dihydromonacolin L carboxylate + H(+). Its pathway is polyketide biosynthesis; lovastatin biosynthesis. Its function is as follows. Esterase; part of the gene cluster that mediates the biosynthesis of monakolin K, also known as lovastatin, and which acts as a potent competitive inhibitor of HMG-CoA reductase. Monakolin K biosynthesis is performed in two stages. The first stage is catalyzed by the nonaketide synthase mokA, which belongs to type I polyketide synthases and catalyzes the iterative nine-step formation of the polyketide. This PKS stage completed by the action of dehydrogenase mokE, which catalyzes the NADPH-dependent reduction of the unsaturated tetra-, penta- and heptaketide intermediates that arise during the mokA-mediated biosynthesis of the nonaketide chain and leads to dihydromonacolin L. Covalently bound dihydromonacolin L is released from mokA by the mokD esterase. Conversion of dihydromonacolin L into monacolin L and then monacolin J is subsequently performed with the participation of molecular oxygen and P450 monoogygenase mokC. Finally, mokF performs the conversion of monacoline J to monacoline K through the addition of the side-chain diketide moiety (2R)-2-methylbutanoate produced by the diketide synthase mokB. This is Esterase mokD from Monascus pilosus (Red mold).